Consider the following 37-residue polypeptide: Large ribosomal subunit protein bL36 (37 aa).

Belongs to the bacterial ribosomal protein bL36 family.

The protein is Large ribosomal subunit protein bL36 of Aquifex aeolicus (strain VF5).